A 2296-amino-acid chain; its full sequence is MKGHQFKSWIFELREIVREIKNSHYFLDSWTQFNSVGSFIHIFFHQERFRKLLDPRILSILLLRNSQGSTSNRYFTIKGVVLFLVAALLYRINNRNMVESKNLYLKGLLPIPMNSIGPRNDTSEESFGSSNINRLIVSLLYLTKGKKISESCFRDPKESTWVLPITKKCIMPESNWSSRWWRNWIGKKRDFCCKISNETVAGIDISFKEKDIKYLEFLFVYYMDDPIRKGHDWELFDRLSPSKRRNIINLNSGQLFEILVKDWICYLMFAFREKIPIEVEGFFKQQGAGSTIQSNDIEHVSHLFSRNKWPISLQNCAQFHMWQFHQDLFVSWGKNPHESDFFRKISRENWIWLDNVWLVNKDRFFSKVRNVSSNIQYDSTRSSFVKVTDSSQLNGSSDQFIDPFDSISNEDSEYHTLINQREIQQLKERSILWDPSFIQTEGREIESDRFPKYLSGYSSMPRLFTEREKRMNNNLLPEESEEFLGNPTRAIRSFFSDRWSELHLGSNPTERSTRDQKLLKKEQDVSFVPSRRSENKEIVNIFKIITYLQNTVSIHPISSDLGYDMVPKDELDMDSSNKISFLNKNPFFDLFHLFHERKRGGYTLRHDFEAEERFQEMADLFTLSITEPDLVYHKGFAFSIDSYGLDQRQFLKEVFNSRDESKKKSLLVLPPIFYEENESFYRRIRKNWVRISCGNYLEDPKPKRVVFASNNIIEAVNQYRLIRNLIQIQFQYSPYGYIRNVLNRFFLMKRPDRNFEYGIQRDLIGNDTLNHRTIMKDTINQHLSNLKKSQKKWFDPLIFLSRTERSINRDPNAYRYKWSNGSKNFQEHLEHFVSERKSRFQVMFDRLCINQYSIDWSEVIDKKDLSKSLRFFLSKLLRFFLSKLLRFLSKLLLFLSNSLPFLFVSFENIPIHRSEIHIYELKGPNDQLCNQLLESIGLQIVHLKKLKPFLLDDHNTSQKSKFLINGGTISPFLFNKIPKWIIDSFHTRKNRRKSFDNTDSYFSIVSHDQDNWLNPVKPFQRSSLISSFSKANRLRFLNNPHHFCFYCNKRFPFYVEKAHLNNSDFTYGQFLTILFIHNKIFSSCGGKKKHAFLERDTISPSSIESQVSNIFISNDFPQSGDERYNLYKSFHFPIRSDPLVRRAIYSIADISGTPLIEGQRVNFERTYCQTLSDMNRSDSEEKSLHQYLNFNSNMGLIHTPCSEKYLQRKKRSLRLKSLKRCVDKGQLDRTFQRDSAFSTLSKWNLFQTYMPWFFTSTGYKYLNLIFLDTFSDLLRILSSSQKFVSIFHDIMHGLDISWRILQKKLCLPQRNLISEISSKSLHNLLLSEEMIHRNNESSLISIHLRSPNVREVLYSILFLLLVAGYIVRTHLLFVSRAYSELQTEFEKIKSLMIPSYMIELRKLLDRYPTSELNSFWLKNLFLVALEQLGDCLEEIRGSGGNMLWGGDPAYGVKSIRSKKKDLKINFIDIIDLISIIPNPINRITFSRNTRHLSHTSKEIYSLIRKRKNVSGDWIDDKIESWVANSDSIDDKEREFLVQFSTLRAEKRIDQILLSLTHNDHLSKNDSGYQMIEQPGTIYLRYLVDIHKKYLMNYEFNTSCLAERRIFLAHYQTITYSQTSCGANSFHFPSHGKPFSLRLALSPSRSVLVIGSIGIGRSYLVKYLATNSYVPFITVFLNKFLDNKPKGFFIDDIDIDDSDDIDASNDIDRELDTELELLTMMNALTMDMMSEIDRFYITLQFELAKAMSPCIIWIPNIHDLDVNESNYLALGLLVNSLSRDCERCSTRNILVIASTHIPQKVDPALIAPNKLNTCIKIRRLLIPQQRKHFFTLSYTRGFHLEKKMFHTNGFESITMGSSARDLVALTNEALSISITQKKSIIDTNTIRSALHRQTWDLRSQVRSVQDHGILFYQIGRAVAQNVLISNCPIDPISIYMKKKSCNEGDSYLYKWYFELGTSMKKFTILLYLLSCSAGSVAQDLWSLPGPDEKTRITSYGFIENDSDLVHGLLEVQGALVGSSRTEKDCSQFDNDRVTLLFRSEPRDPLYMMQDGSCSIVDQRFLYEKYESEFEEGEGEGVLDPQQIEEDLFNHIVWAPRIWRPRGFLFDCIERPNELGFPYLAGSFRGRRIIYDEKYELQENDSEFLQSGTMQYQRRDRSSKEQGFFRISQFIWDPADPLFFLFKEQPFVSVFSHREFFADEEMSKGLLTSQTDPPTSIYKRWFIKNTQEKHFELLIQRQRWLRTNSSLSNGFFRSNTLSESYQYLSNLFLSNGTLLDRMTKTLLKKRWLFPDEMKIGFM.

ATP is bound at residue 1650 to 1657 (GSIGIGRS).

The protein belongs to the Ycf2 family.

Its subcellular location is the plastid. The protein resides in the chloroplast stroma. Functionally, probable ATPase of unknown function. Its presence in a non-photosynthetic plant (Epifagus virginiana) and experiments in tobacco indicate that it has an essential function which is probably not related to photosynthesis. The sequence is that of Protein Ycf2 from Arabis hirsuta (Hairy rock-cress).